The chain runs to 1406 residues: DNA-directed RNA polymerase subunit beta' (1406 aa).

Zn(2+)-binding residues include cysteine 70, cysteine 72, cysteine 85, and cysteine 88. The Mg(2+) site is built by aspartate 460, aspartate 462, and aspartate 464. Residues cysteine 814, cysteine 888, cysteine 895, and cysteine 898 each coordinate Zn(2+).

This sequence belongs to the RNA polymerase beta' chain family. The RNAP catalytic core consists of 2 alpha, 1 beta, 1 beta' and 1 omega subunit. When a sigma factor is associated with the core the holoenzyme is formed, which can initiate transcription. Mg(2+) serves as cofactor. It depends on Zn(2+) as a cofactor.

It carries out the reaction RNA(n) + a ribonucleoside 5'-triphosphate = RNA(n+1) + diphosphate. Its function is as follows. DNA-dependent RNA polymerase catalyzes the transcription of DNA into RNA using the four ribonucleoside triphosphates as substrates. The chain is DNA-directed RNA polymerase subunit beta' from Yersinia pseudotuberculosis serotype O:1b (strain IP 31758).